The sequence spans 432 residues: Adenylosuccinate synthetase (432 aa).

Residues Gly-13–Lys-19 and Gly-41–Thr-43 contribute to the GTP site. The Proton acceptor role is filled by Asp-14. Mg(2+) is bound by residues Asp-14 and Gly-41. IMP-binding positions include Asp-14 to Lys-17, Asn-39 to His-42, Thr-130, Arg-144, Gln-225, Thr-240, and Arg-304. The Proton donor role is filled by His-42. Substrate is bound at residue Ala-300 to Arg-306. GTP is bound by residues Arg-306, Lys-332–Asp-334, and Ser-415–Gly-417.

Belongs to the adenylosuccinate synthetase family. As to quaternary structure, homodimer. Requires Mg(2+) as cofactor.

It is found in the cytoplasm. The catalysed reaction is IMP + L-aspartate + GTP = N(6)-(1,2-dicarboxyethyl)-AMP + GDP + phosphate + 2 H(+). It participates in purine metabolism; AMP biosynthesis via de novo pathway; AMP from IMP: step 1/2. Plays an important role in the de novo pathway of purine nucleotide biosynthesis. Catalyzes the first committed step in the biosynthesis of AMP from IMP. The chain is Adenylosuccinate synthetase from Salmonella typhi.